A 352-amino-acid polypeptide reads, in one-letter code: uncharacterized protein (352 aa).

This is an uncharacterized protein from Frog virus 3 (isolate Goorha) (FV-3).